The following is a 645-amino-acid chain: Putative galactocerebrosidase (645 aa).

Residues 1–16 form the signal peptide; it reads MFSIFIKIILILPSIA. Thr-87 and Trp-128 together coordinate substrate. N-linked (GlcNAc...) asparagine glycosylation is present at Asn-141. Residue Asn-171 participates in substrate binding. Residue Glu-172 is the Proton donor/acceptor of the active site. 2 N-linked (GlcNAc...) asparagine glycosylation sites follow: Asn-174 and Asn-193. Residue Glu-248 is the Nucleophile of the active site. Cys-261 and Cys-365 form a disulfide bridge. Asn-274, Asn-395, Asn-411, Asn-532, Asn-616, Asn-620, and Asn-638 each carry an N-linked (GlcNAc...) asparagine glycan.

Belongs to the glycosyl hydrolase 59 family.

The catalysed reaction is a beta-D-Gal-(1&lt;-&gt;1')-ceramide + H2O = an N-acyl-sphingoid base + D-galactose. It catalyses the reaction a beta-D-galactosyl-(1&lt;-&gt;1')-N-acylsphing-4-enine + H2O = an N-acylsphing-4-enine + D-galactose. Functionally, hydrolyzes the galactose ester bonds of galactosylceramide, galactosylsphingoid base, lactosylceramide, and monogalactosyldiglyceride. C.elegans contain specific sphingoid bases, which are unique or different in structure compared to the sphingoid bases found in other animals. Two examples of these distinctive compounds are: 15-methylhexadecasphinganine and 15-methylhexadecasphing-4-enine. The chain is Putative galactocerebrosidase from Caenorhabditis elegans.